Reading from the N-terminus, the 123-residue chain is Small ribosomal subunit protein uS12 (123 aa).

The disordered stretch occupies residues 1 to 25; the sequence is MPTINQLVRKPRKSRSALNKAPALQ. 3-methylthioaspartic acid is present on Asp-90.

The protein belongs to the universal ribosomal protein uS12 family. In terms of assembly, part of the 30S ribosomal subunit. Contacts proteins S8 and S17. May interact with IF1 in the 30S initiation complex.

With S4 and S5 plays an important role in translational accuracy. Functionally, interacts with and stabilizes bases of the 16S rRNA that are involved in tRNA selection in the A site and with the mRNA backbone. Located at the interface of the 30S and 50S subunits, it traverses the body of the 30S subunit contacting proteins on the other side and probably holding the rRNA structure together. The combined cluster of proteins S8, S12 and S17 appears to hold together the shoulder and platform of the 30S subunit. The protein is Small ribosomal subunit protein uS12 of Ehrlichia canis (strain Jake).